We begin with the raw amino-acid sequence, 931 residues long: Bifunctional uridylyltransferase/uridylyl-removing enzyme (931 aa).

The uridylyltransferase stretch occupies residues 1 to 383 (MDSVTPNSRP…KTGNSWRRVP (383 aa)). A uridylyl-removing region spans residues 384-739 (ESDDFIVDNN…VGFDPARGVT (356 aa)). One can recognise an HD domain in the interval 499 to 622 (VDEHLIRCIG…VQSVEQMKLL (124 aa)). ACT domains are found at residues 740–822 (ELTI…AVAR) and 851–931 (VIEV…QPAA).

This sequence belongs to the GlnD family. Mg(2+) is required as a cofactor.

The enzyme catalyses [protein-PII]-L-tyrosine + UTP = [protein-PII]-uridylyl-L-tyrosine + diphosphate. The catalysed reaction is [protein-PII]-uridylyl-L-tyrosine + H2O = [protein-PII]-L-tyrosine + UMP + H(+). With respect to regulation, uridylyltransferase (UTase) activity is inhibited by glutamine, while glutamine activates uridylyl-removing (UR) activity. Functionally, modifies, by uridylylation and deuridylylation, the PII regulatory proteins (GlnB and homologs), in response to the nitrogen status of the cell that GlnD senses through the glutamine level. Under low glutamine levels, catalyzes the conversion of the PII proteins and UTP to PII-UMP and PPi, while under higher glutamine levels, GlnD hydrolyzes PII-UMP to PII and UMP (deuridylylation). Thus, controls uridylylation state and activity of the PII proteins, and plays an important role in the regulation of nitrogen fixation and metabolism. In Bradyrhizobium sp. (strain BTAi1 / ATCC BAA-1182), this protein is Bifunctional uridylyltransferase/uridylyl-removing enzyme.